Reading from the N-terminus, the 359-residue chain is Phosphate acyltransferase (359 aa).

Belongs to the PlsX family. As to quaternary structure, homodimer. Probably interacts with PlsY.

It is found in the cytoplasm. The enzyme catalyses a fatty acyl-[ACP] + phosphate = an acyl phosphate + holo-[ACP]. Its pathway is lipid metabolism; phospholipid metabolism. In terms of biological role, catalyzes the reversible formation of acyl-phosphate (acyl-PO(4)) from acyl-[acyl-carrier-protein] (acyl-ACP). This enzyme utilizes acyl-ACP as fatty acyl donor, but not acyl-CoA. This chain is Phosphate acyltransferase, found in Koribacter versatilis (strain Ellin345).